The chain runs to 520 residues: MLHKSPSRKRFASPLHLGCILTLTVLCLIAYYFALPDYLSVGKSSSRGAMDQKSDGTFRLKSIYRHGVGANHRLHQRLEVTPEVISAAGMLYQETTTQGQDFEDQEPLWTTNAEYATTNPFDFEFELRRMPLLMKRMKERDPEFIESYIYGETYMTEEEEHAMWIDDDIVAPNITDRGTVVSLALMSSNAYVRIPQTGDWRNVTEPWNETEPEDFGWDGDGIRGHVFYNEVENIVVLSIKGTSAQGLPGSGEDETTGNDKINDNLLFSCCCARVSYLWTTVCDCYVKSYTCDESCLEKELRRKDRFYSAVVDIYKGVLKEYPDAAIWVTGHSLGGALASLLGRTFGLPAVAFESPGELLPSKRLHLPFPPGLPSYMEGIWHFGHNADPIFMGTCNGASSSCSLVGYAMETACHTGRVCVYDVVNDKGWSVNMFNHRIHKVIDEVLLGYEQAAKCVEPEPCVDCYNWKFIPSRDWESSSRLITKTKSHAAPTTTTRTTATTTSSSTCVGRNWLGFCTKYEL.

The Cytoplasmic portion of the chain corresponds to 1–14; it reads MLHKSPSRKRFASP. The helical; Signal-anchor for type II membrane protein transmembrane segment at 15 to 35 threads the bilayer; the sequence is LHLGCILTLTVLCLIAYYFAL. Topologically, residues 36–520 are lumenal; sequence PDYLSVGKSS…WLGFCTKYEL (485 aa). 3 N-linked (GlcNAc...) asparagine glycosylation sites follow: Asn173, Asn202, and Asn208. Ser332 functions as the Charge relay system in the catalytic mechanism.

It belongs to the AB hydrolase superfamily. Lipase family. As to quaternary structure, binds to both phosphatidylinositol (PI) and phosphatidylinositol 3,5-bisphosphate (PIP2).

The protein resides in the endosome. The protein localises to the multivesicular body membrane. It localises to the prevacuolar compartment membrane. The catalysed reaction is a triacylglycerol + H2O = a diacylglycerol + a fatty acid + H(+). Its function is as follows. Lipase which is essential for lysis of subvacuolar cytoplasm to vacuole targeted bodies and intravacuolar autophagic bodies. Involved in the lysis of intravacuolar multivesicular body (MVB) vesicles. The intravacuolar membrane disintegration by ATG15 is critical to life span extension. The protein is Putative lipase ATG15 (ATG15) of Saccharomyces cerevisiae (strain YJM789) (Baker's yeast).